Consider the following 178-residue polypeptide: Probetacellulin (178 aa).

The signal sequence occupies residues 1–31 (MDRAARCSGASSLPLLLALALGLVILHCVVA). The Extracellular segment spans residues 32–118 (DGNSTRSPET…LFYLRGDRGQ (87 aa)). Asn-34 is a glycosylation site (N-linked (GlcNAc...) asparagine). One can recognise an EGF-like domain in the interval 65 to 105 (HFSRCPKQYKHYCIKGRCRFVVAEQTPSCVCDEGYIGARCE). 3 disulfide bridges follow: Cys-69–Cys-82, Cys-77–Cys-93, and Cys-95–Cys-104. Positions 112–178 (LRGDRGQILV…NEDIEETNIA (67 aa)) are cleaved as a propeptide — removed in mature form. Residues 119 to 139 (ILVICLIAVMVVFIILVIGVC) traverse the membrane as a helical segment. At 140–178 (TCCHPLRKRRKRKKKEEEMETLGKDITPINEDIEETNIA) the chain is on the cytoplasmic side.

As to quaternary structure, monomer. Interacts with EGFR and ERBB4. As to expression, synthesized in several tissues and tumor cells. Predominantly expressed in pancreas and small intestine.

The protein localises to the secreted. It localises to the extracellular space. It is found in the cell membrane. In terms of biological role, growth factor that binds to EGFR, ERBB4 and other EGF receptor family members. Potent mitogen for retinal pigment epithelial cells and vascular smooth muscle cells. The protein is Probetacellulin (BTC) of Homo sapiens (Human).